The following is a 325-amino-acid chain: MTTPFVLAVPSKGRLQENADAFFGRAGLTLAKPRGARDYRGTITGLDNVEIAYLSASEIAAQLARGQVHLGITGEDLVRETIADADKRVMLIEGLGFGYANVVVAVPQAWIDVRTMADLDDVATSFRVKHNRRMRVATKYINLTRHFFALHGIVDYRIVESAGATEGAPASGAAELIVDITTTGATLAANGLKMLDDGMMLRSQANLVASRAADWTPEARETARVILDHIASRARAAKYKEVRTCLPGCDAALLSEIEQHFGALAPFGTPPAGGILTLHCPPAQLYPLGTLLRARGAETVSIGSLDYVMARDNPLFSRLEAFLGA.

The protein belongs to the ATP phosphoribosyltransferase family. Long subfamily. Mg(2+) serves as cofactor.

The protein resides in the cytoplasm. It carries out the reaction 1-(5-phospho-beta-D-ribosyl)-ATP + diphosphate = 5-phospho-alpha-D-ribose 1-diphosphate + ATP. The protein operates within amino-acid biosynthesis; L-histidine biosynthesis; L-histidine from 5-phospho-alpha-D-ribose 1-diphosphate: step 1/9. Feedback inhibited by histidine. Catalyzes the condensation of ATP and 5-phosphoribose 1-diphosphate to form N'-(5'-phosphoribosyl)-ATP (PR-ATP). Has a crucial role in the pathway because the rate of histidine biosynthesis seems to be controlled primarily by regulation of HisG enzymatic activity. In Afipia carboxidovorans (strain ATCC 49405 / DSM 1227 / KCTC 32145 / OM5) (Oligotropha carboxidovorans), this protein is ATP phosphoribosyltransferase.